A 295-amino-acid polypeptide reads, in one-letter code: Putative nudix hydrolase 7 (295 aa).

A Nudix hydrolase domain is found at 9-182 (SWRSAASIIL…KYALPPPQVY (174 aa)). A Nudix box motif is present at residues 52–73 (TDAKLGDEFRIAAVRELFEESG). Glu-67 and Glu-71 together coordinate Mg(2+).

This sequence belongs to the Nudix hydrolase family. It depends on Mg(2+) as a cofactor. Mn(2+) is required as a cofactor.

Functionally, probably mediates the hydrolysis of some nucleoside diphosphate derivatives. In Caenorhabditis elegans, this protein is Putative nudix hydrolase 7 (ndx-7).